An 89-amino-acid polypeptide reads, in one-letter code: Small ribosomal subunit protein uS15 (89 aa).

The protein belongs to the universal ribosomal protein uS15 family. Part of the 30S ribosomal subunit. Forms a bridge to the 50S subunit in the 70S ribosome, contacting the 23S rRNA.

One of the primary rRNA binding proteins, it binds directly to 16S rRNA where it helps nucleate assembly of the platform of the 30S subunit by binding and bridging several RNA helices of the 16S rRNA. Its function is as follows. Forms an intersubunit bridge (bridge B4) with the 23S rRNA of the 50S subunit in the ribosome. This Cupriavidus metallidurans (strain ATCC 43123 / DSM 2839 / NBRC 102507 / CH34) (Ralstonia metallidurans) protein is Small ribosomal subunit protein uS15.